The following is a 200-amino-acid chain: Pyridoxal 5'-phosphate synthase subunit PdxT (200 aa).

An L-glutamine-binding site is contributed by 52–54; sequence GES. C84 (nucleophile) is an active-site residue. L-glutamine is bound by residues R116 and 145-146; that span reads IR. Catalysis depends on charge relay system residues H181 and E183.

This sequence belongs to the glutaminase PdxT/SNO family. In the presence of PdxS, forms a dodecamer of heterodimers. Only shows activity in the heterodimer.

It catalyses the reaction aldehydo-D-ribose 5-phosphate + D-glyceraldehyde 3-phosphate + L-glutamine = pyridoxal 5'-phosphate + L-glutamate + phosphate + 3 H2O + H(+). It carries out the reaction L-glutamine + H2O = L-glutamate + NH4(+). The protein operates within cofactor biosynthesis; pyridoxal 5'-phosphate biosynthesis. Its function is as follows. Catalyzes the hydrolysis of glutamine to glutamate and ammonia as part of the biosynthesis of pyridoxal 5'-phosphate. The resulting ammonia molecule is channeled to the active site of PdxS. This chain is Pyridoxal 5'-phosphate synthase subunit PdxT, found in Saccharolobus solfataricus (strain ATCC 35092 / DSM 1617 / JCM 11322 / P2) (Sulfolobus solfataricus).